The primary structure comprises 415 residues: GPI mannosyltransferase 1 (415 aa).

The next 9 membrane-spanning stretches (helical) occupy residues 8–28, 82–102, 134–154, 158–178, 222–242, 284–304, 329–349, 354–374, and 387–407; these read PSLV…YGAW, FFSF…WLIA, TRGS…WAVL, ITLA…PFVY, LLLT…MYIL, FESL…PIVL, SQYF…SSLM, LGIT…QQGY, and GLFL…GIII.

It belongs to the PIGM family.

Its subcellular location is the endoplasmic reticulum membrane. It participates in glycolipid biosynthesis; glycosylphosphatidylinositol-anchor biosynthesis. Its function is as follows. Mannosyltransferase involved in glycosylphosphatidylinositol-anchor biosynthesis. Transfers the first alpha-1,4-mannose to GlcN-acyl-PI during GPI precursor assembly. Required for cell wall integrity. The polypeptide is GPI mannosyltransferase 1 (gpi14) (Aspergillus oryzae (strain ATCC 42149 / RIB 40) (Yellow koji mold)).